We begin with the raw amino-acid sequence, 57 residues long: Protein CgkB (57 aa).

This is Protein CgkB (cgkB) from Pseudoalteromonas carrageenovora (Alteromonas carrageenovora).